Reading from the N-terminus, the 157-residue chain is Transcriptional repressor NrdR (157 aa).

A zinc finger lies at 3 to 34; it reads CPFCGHAESQVKDSRPSEDGAAIRRRRMCPEC. One can recognise an ATP-cone domain in the interval 49 to 139; it reads LIIVKRSGRR…VYRDFKETSD (91 aa).

The protein belongs to the NrdR family. Zn(2+) serves as cofactor.

In terms of biological role, negatively regulates transcription of bacterial ribonucleotide reductase nrd genes and operons by binding to NrdR-boxes. The chain is Transcriptional repressor NrdR from Caulobacter vibrioides (strain ATCC 19089 / CIP 103742 / CB 15) (Caulobacter crescentus).